A 286-amino-acid chain; its full sequence is Ribosome-inactivating protein momordin II (286 aa).

The signal sequence occupies residues 1-23; sequence MVKCLLLSFLIIAIFIGVPTAKG. E181 is an active-site residue.

It belongs to the ribosome-inactivating protein family. Type 1 RIP subfamily.

The catalysed reaction is Endohydrolysis of the N-glycosidic bond at one specific adenosine on the 28S rRNA.. The sequence is that of Ribosome-inactivating protein momordin II from Momordica balsamina (Bitter gourd).